The sequence spans 393 residues: Riboflavin biosynthesis protein RibBA (393 aa).

The tract at residues 1-200 (MEFDEIKDAL…IESLVNYQKD (200 aa)) is DHBP synthase. D-ribulose 5-phosphate is bound by residues 27–28 (RE), Asp32, 139–143 (RTGHT), and Glu163. Residue Glu28 participates in Mg(2+) binding. His142 contributes to the Mg(2+) binding site. The GTP cyclohydrolase II stretch occupies residues 201 to 393 (KDTSVELKAK…TKKIKMGHLI (193 aa)). 249-253 (RIHSA) serves as a coordination point for GTP. Residues Cys254, Cys265, and Cys267 each coordinate Zn(2+). Residues Gln270, 291–293 (EGR), and Thr313 each bind GTP. Residue Asp325 is the Proton acceptor; for GTP cyclohydrolase activity of the active site. The active-site Nucleophile; for GTP cyclohydrolase activity is the Arg327. Residues Ser348 and Lys353 each contribute to the GTP site.

In the N-terminal section; belongs to the DHBP synthase family. It in the C-terminal section; belongs to the GTP cyclohydrolase II family. It depends on Mg(2+) as a cofactor. Mn(2+) is required as a cofactor. The cofactor is Zn(2+).

It catalyses the reaction D-ribulose 5-phosphate = (2S)-2-hydroxy-3-oxobutyl phosphate + formate + H(+). The catalysed reaction is GTP + 4 H2O = 2,5-diamino-6-hydroxy-4-(5-phosphoribosylamino)-pyrimidine + formate + 2 phosphate + 3 H(+). It participates in cofactor biosynthesis; riboflavin biosynthesis; 2-hydroxy-3-oxobutyl phosphate from D-ribulose 5-phosphate: step 1/1. It functions in the pathway cofactor biosynthesis; riboflavin biosynthesis; 5-amino-6-(D-ribitylamino)uracil from GTP: step 1/4. Functionally, catalyzes the conversion of D-ribulose 5-phosphate to formate and 3,4-dihydroxy-2-butanone 4-phosphate. In terms of biological role, catalyzes the conversion of GTP to 2,5-diamino-6-ribosylamino-4(3H)-pyrimidinone 5'-phosphate (DARP), formate and pyrophosphate. This chain is Riboflavin biosynthesis protein RibBA, found in Staphylococcus haemolyticus (strain JCSC1435).